Reading from the N-terminus, the 102-residue chain is Large ribosomal subunit protein bL21 (102 aa).

It belongs to the bacterial ribosomal protein bL21 family. As to quaternary structure, part of the 50S ribosomal subunit. Contacts protein L20.

This protein binds to 23S rRNA in the presence of protein L20. This Saccharopolyspora erythraea (strain ATCC 11635 / DSM 40517 / JCM 4748 / NBRC 13426 / NCIMB 8594 / NRRL 2338) protein is Large ribosomal subunit protein bL21.